The primary structure comprises 387 residues: Protein PHYTOCHROME KINASE SUBSTRATE 3 (387 aa).

3 disordered regions span residues M1–L21, H74–Q128, and L242–A271. The segment covering Q12–L21 has biased composition (polar residues). Positions H74–P83 are enriched in basic and acidic residues. A compositionally biased stretch (polar residues) spans H114–Q128. Residues L242–N261 show a composition bias toward low complexity.

The protein belongs to the PKS family.

Functionally, probably involved in the phytochrome signaling pathway. This chain is Protein PHYTOCHROME KINASE SUBSTRATE 3 (PKS3), found in Arabidopsis thaliana (Mouse-ear cress).